We begin with the raw amino-acid sequence, 345 residues long: MKQLKRKRKSNFSVQETQTLLKEITKRKEVIFSKQLNTTINVMKRMAWEEIAQCVNAVGEGEQRTGTEVKRRYLDWRALMKRKRMKANMKLVGSGFPLPTSDLDDSLTEDIDEKIAFRNDANFDWQNVADFRDAGGSLTEVKVEEEERDPQSPEFEIEEEEEMLSSVIPDSRRENELPDFPHIDEFFTLNSTPSRPTYDEPHLLMNIEKQKLELEKRRLDIEAERLQVEKERLQIEKERLRHLDLEHERLQLEKERLQIEREKWRLQLVSTEKPALENELGQGEKSMLQPQDIEAEKLKLERERLQLEKDRLQFLKFESEKLQIEKERLQVEKERLRIQKEGHLP.

A Myb-like domain is found at 4-77; it reads LKRKRKSNFS…EVKRRYLDWR (74 aa). A Glycyl lysine isopeptide (Lys-Gly) (interchain with G-Cter in SUMO2) cross-link involves residue Lys-9. Residue Ser-106 is modified to Phosphoserine. Glycyl lysine isopeptide (Lys-Gly) (interchain with G-Cter in SUMO2) cross-links involve residues Lys-114 and Lys-142. The disordered stretch occupies residues 141 to 175; that stretch reads VKVEEEERDPQSPEFEIEEEEEMLSSVIPDSRREN. Thr-188 is modified (phosphothreonine). Positions 202-344 form a coiled coil; the sequence is HLLMNIEKQK…RLRIQKEGHL (143 aa). Residues Lys-237, Lys-254, and Lys-273 each participate in a glycyl lysine isopeptide (Lys-Gly) (interchain with G-Cter in SUMO2) cross-link.

This chain is Myb/SANT-like DNA-binding domain-containing protein 4 (Msantd4), found in Rattus norvegicus (Rat).